The following is a 2623-amino-acid chain: MKVKGRGITCLLVSFAVICLVATPGGKACPRRCACYMPTEVHCTFRYLTSIPDSIPPNVERINLGYNSLVRLMETDFSGLTKLELLMLHSNGIHTIPDKTFSDLQALQVLKMSYNKVRKLQKDTFYGLRSLTRLHMDHNNIEFINPEVFYGLNFLRLVHLEGNQLTKLHPDTFVSLSYLQIFKISFIKFLYLSDNFLTSLPQEMVSYMPDLDSLYLHGNPWTCDCHLKWLSDWIQEKPDVIKCKKDRSPSSAQQCPLCMNPRTSKGKPLAMVSAAAFQCAKPTIDSSLKSKSLTILEDSSSAFISPQGFMAPFGSLTLNMTDQSGNEANMVCSIQKPSRTSPIAFTEENDYIVLNTSFSTFLVCNIDYGHIQPVWQILALYSDSPLILERSHLLSETPQLYYKYKQVAPKPEDIFTNIEADLRADPSWLMQDQISLQLNRTATTFSTLQIQYSSDAQITLPRAEMRPVKHKWTMISRDNNTKLEHTVLVGGTVGLNCPGQGDPTPHVDWLLADGSKVRAPYVSEDGRILIDKSGKLELQMADSFDTGVYHCISSNYDDADILTYRITVVEPLVEAYQENGIHHTVFIGETLDLPCHSTGIPDASISWVIPGNNVLYQSSRDKKVLNNGTLRILQVTPKDQGYYRCVAANPSGVDFLIFQVSVKMKGQRPLEHDGETEGSGLDESNPIAHLKEPPGAQLRTSALMEAEVGKHTSSTSKRHNYRELTLQRRGDSTHRRFRENRRHFPPSARRIDPQHWAALLEKAKKNAMPDKRENTTVSPPPVVTQLPNIPGEEDDSSGMLALHEEFMVPATKALNLPARTVTADSRTISDSPMTNINYGTEFSPVVNSQILPPEEPTDFKLSTAIKTTAMSKNINPTMSSQIQGTTNQHSSTVFPLLLGATEFQDSDQMGRGREHFQSRPPITVRTMIKDVNVKMLSSTTNKLLLESVNTTNSHQTSVREVSEPRHNHFYSHTTQILSTSTFPSDPHTAAHSQFPIPRNSTVNIPLFRRFGRQRKIGGRGRIISPYRTPVLRRHRYSIFRSTTRGSSEKSTTAFSATVLNVTCLSCLPRERLTTATAALSFPSAAPITFPKADIARVPSEESTTLVQNPLLLLENKPSVEKTTPTIKYFRTEISQVTPTGAVMTYAPTSIPMEKTHKVNASYPRVSSTNEAKRDSVITSSLSGAITKPPMTIIAITRFSRRKIPWQQNFVNNHNPKGRLRNQHKVSLQKSTAVMLPKTSPALPRDKVSPFHFTTLSTSVMQIPSNTLTTAHHTTTKTHNPGSLPTKKELPFPPLNPMLPSIISKDSSTKSIISTQTAIPATTPTFPASVITYETQTERSRAQTIQREQEPQKKNRTDPNISPDQSSGFTTPTAMTPPVLTTAETSVKPSVSAFTHSPPENTTGISSTISFHSRTLNLTDVIEELAQASTQTLKSTIASETTLSSKSHQSTTTRKAIIRHSTIPPFLSSSATLMPVPISPPFTQRAVTDNVATPISGLMTNTVVKLHESSRHNAKPQQLVAEVATSPKVHPNAKFTIGTTHFIYSNLLHSTPMPALTTVKSQNSKLTPSPWAENQFWHKPYSEIAEKGKKPEVSMLATTGLSEATTLVSDWDGQKNTKKSDFDKKPVQEATTSKLLPFDSLSRYIFEKPRIVGGKAASFTIPANSDAFLPCEAVGNPLPTIHWTRVPSGLDLSKRKQNSRVQVLPNGTLSIQRVEIQDRGQYLCSASNLFGTDHLHVTLSVVSYPPRILERRTKEITVHSGSTVELKCRAEGRPSPTVTWILANQTVVSESSQGSRQAVVTVDGTLVLHNLSIYDRGFYKCVASNPGGQDSLLVKIQVIAAPPVILEQRRQVIVGTWGESLKLPCTAKGTPQPSVYWVLSDGTEVKPLQFTNSKLFLFSNGTLYIRNLASSDRGTYECIATSSTGSERRVVMLTMEERVTSPRIEAASQKRTEVNFGDKLLLNCSATGEPKPQIMWRLPSKAVVDQQHRVGSWIHVYPNGSLFIGSVTEKDSGVYLCVARNKMGDDLILMHVSLRLKPAKIDHKQYFRKQVLHGKDFQVDCKASGSPVPEISWSLPDGTMINNAMQADDSGHRTRRYTLFNNGTLYFNKVGVAEEGDYTCYAQNTLGKDEMKVHLTVITAAPRIRQSNKTNKRIKAGDTAVLDCEVTGDPKPKIFWLLPSNDMISFSIDRYTFHANGSLTINKVKLLDSGEYVCVARNPSGDDTKMYKLDVVSKPPLINGLYTNRTVIKATAVRHSKKHFDCRAEGTPSPEVMWIMPDNIFLTAPYYGSRITVHKNGTLEIRNVRLSDSADFICVARNEGGESVLVVQLEVLEMLRRPTFRNPFNEKIVAQLGKSTALNCSVDGNPPPEIIWILPNGTRFSNGPQSYQYLIASNGSFIISKTTREDAGKYRCAARNKVGYIEKLVILEIGQKPVILTYAPGTVKGISGESLSLHCVSDGIPKPNIKWTMPSGYVVDRPQINGKYILHDNGTLVIKEATAYDRGNYICKAQNSVGHTLITVPVMIVAYPPRITNRPPRSIVTRTGAAFQLHCVALGVPKPEITWEMPDHSLLSTASKERTHGSEQLHLQGTLVIQNPQTSDSGIYKCTAKNPLGSDYAATYIQVI.

The N-terminal stretch at methionine 1 to alanine 28 is a signal peptide. Residues cysteine 29 to proline 56 form the LRRNT domain. 6 LRR repeats span residues asparagine 58–glycine 79, lysine 82–aspartate 103, alanine 106–glycine 127, serine 130–glycine 151, phenylalanine 154–serine 175, and phenylalanine 186–tyrosine 207. The LRRCT domain maps to asparagine 219 to lysine 281. Asparagine 319 and asparagine 439 each carry an N-linked (GlcNAc...) asparagine glycan. Ig-like C2-type domains follow at residues proline 461–threonine 567 and proline 571–serine 661. Disulfide bonds link cysteine 497–cysteine 551 and cysteine 595–cysteine 645. N-linked (GlcNAc...) asparagine glycosylation is present at asparagine 627. 2 disordered regions span residues arginine 668–glutamate 692 and alanine 767–asparagine 788. 2 N-linked (GlcNAc...) asparagine glycosylation sites follow: asparagine 774 and asparagine 999. Disordered regions lie at residues threonine 1334–proline 1376 and serine 1434–arginine 1453. The span at glutamine 1335–threonine 1356 shows a compositional bias: basic and acidic residues. A compositionally biased stretch (polar residues) spans aspartate 1357–alanine 1373. Ig-like C2-type domains follow at residues proline 1648–serine 1739, proline 1745–glutamine 1836, proline 1841–threonine 1933, proline 1941–arginine 2034, proline 2037–threonine 2135, proline 2141–aspartate 2229, proline 2234–leucine 2331, proline 2337–glutamate 2427, proline 2432–threonine 2518, and proline 2528–isoleucine 2623. Cystine bridges form between cysteine 1670–cysteine 1723, cysteine 1767–cysteine 1820, and cysteine 1864–cysteine 1917. Residues asparagine 1899 and asparagine 1962 are each glycosylated (N-linked (GlcNAc...) asparagine). Intrachain disulfides connect cysteine 1963-cysteine 2016, cysteine 2060-cysteine 2119, cysteine 2163-cysteine 2213, cysteine 2261-cysteine 2313, cysteine 2359-cysteine 2411, cysteine 2454-cysteine 2506, and cysteine 2550-cysteine 2605. Residue asparagine 2101 is glycosylated (N-linked (GlcNAc...) asparagine). Position 2603 is a phosphotyrosine (tyrosine 2603).

Its subcellular location is the secreted. Its function is as follows. Involved in the control of early migration of neurons expressing gonadotropin-releasing hormone (GNRH neurons). May be involved in the maintenance of osteochondroprogenitor cells pool. The sequence is that of Immunoglobulin superfamily member 10 (IGSF10) from Homo sapiens (Human).